We begin with the raw amino-acid sequence, 455 residues long: Probable glycine dehydrogenase (decarboxylating) subunit 1 (455 aa).

This sequence belongs to the GcvP family. N-terminal subunit subfamily. In terms of assembly, the glycine cleavage system is composed of four proteins: P, T, L and H. In this organism, the P 'protein' is a heterodimer of two subunits.

It carries out the reaction N(6)-[(R)-lipoyl]-L-lysyl-[glycine-cleavage complex H protein] + glycine + H(+) = N(6)-[(R)-S(8)-aminomethyldihydrolipoyl]-L-lysyl-[glycine-cleavage complex H protein] + CO2. Its function is as follows. The glycine cleavage system catalyzes the degradation of glycine. The P protein binds the alpha-amino group of glycine through its pyridoxal phosphate cofactor; CO(2) is released and the remaining methylamine moiety is then transferred to the lipoamide cofactor of the H protein. This is Probable glycine dehydrogenase (decarboxylating) subunit 1 from Francisella tularensis subsp. novicida (strain U112).